A 92-amino-acid chain; its full sequence is Small ribosomal subunit protein uS19 (92 aa).

It belongs to the universal ribosomal protein uS19 family.

Its function is as follows. Protein S19 forms a complex with S13 that binds strongly to the 16S ribosomal RNA. The chain is Small ribosomal subunit protein uS19 from Bacillus cereus (strain B4264).